We begin with the raw amino-acid sequence, 169 residues long: Ribosome maturation factor RimP (169 aa).

It belongs to the RimP family.

It localises to the cytoplasm. Required for maturation of 30S ribosomal subunits. This chain is Ribosome maturation factor RimP, found in Pseudomonas putida (strain ATCC 700007 / DSM 6899 / JCM 31910 / BCRC 17059 / LMG 24140 / F1).